The chain runs to 219 residues: RPA-interacting protein (219 aa).

Ser-18 is subject to Phosphoserine. Lys-121 participates in a covalent cross-link: Glycyl lysine isopeptide (Lys-Gly) (interchain with G-Cter in SUMO); in isoform 2. The RIP-type zinc-finger motif lies at Cys-137–Cys-212. A mediates nuclear export region spans residues Ser-164–Ile-180.

As to quaternary structure, interacts with the RPA1 subunit of RPA complex. Sumoylated. Sumoylation is required for localization in the nuclear PML body and transport of RPA complex in PML body. Upon UV irradiation and during S phase, it is desumoylated, releasing RPA complex that is translocated to sites of DNA damage. Sumoylation takes place at different Lys residues. Variant 'Lys-103' adds a sumoylation site and increases total sumoylation levels. In terms of tissue distribution, widely expressed. Expressed in pancreas, kidney, muscle, liver, lung, placenta, brain, heart, leukocytes, colon, intestine, ovary, testis, prostate, thymus and spleen.

It localises to the cytoplasm. Its subcellular location is the nucleus. It is found in the PML body. In terms of biological role, mediates the import of RPA complex into the nucleus, possibly via some interaction with importin beta. Isoform 2 is sumoylated and mediates the localization of RPA complex into the PML body of the nucleus, thereby participating in RPA function in DNA metabolism. In Homo sapiens (Human), this protein is RPA-interacting protein (RPAIN).